The sequence spans 123 residues: Putative outer membrane protein CPn_0818/CP_1053/CPj0818/CpB0847 (123 aa).

The signal sequence occupies residues 1–30; that stretch reads MKRQKRKQSITLIEMMVVITLIGIIGGALA.

It is found in the cell outer membrane. This is Putative outer membrane protein CPn_0818/CP_1053/CPj0818/CpB0847 from Chlamydia pneumoniae (Chlamydophila pneumoniae).